Consider the following 1404-residue polypeptide: DNA-directed RNA polymerase subunit beta' (1404 aa).

Zn(2+) contacts are provided by cysteine 70, cysteine 72, cysteine 85, and cysteine 88. Mg(2+)-binding residues include aspartate 460, aspartate 462, and aspartate 464. The Zn(2+) site is built by cysteine 825, cysteine 899, cysteine 906, and cysteine 909.

This sequence belongs to the RNA polymerase beta' chain family. As to quaternary structure, the RNAP catalytic core consists of 2 alpha, 1 beta, 1 beta' and 1 omega subunit. When a sigma factor is associated with the core the holoenzyme is formed, which can initiate transcription. Mg(2+) serves as cofactor. It depends on Zn(2+) as a cofactor.

The catalysed reaction is RNA(n) + a ribonucleoside 5'-triphosphate = RNA(n+1) + diphosphate. Its function is as follows. DNA-dependent RNA polymerase catalyzes the transcription of DNA into RNA using the four ribonucleoside triphosphates as substrates. This is DNA-directed RNA polymerase subunit beta' from Nitrosomonas eutropha (strain DSM 101675 / C91 / Nm57).